The following is a 645-amino-acid chain: Beta-galactosidase BgaA (645 aa).

Arg-102 serves as a coordination point for substrate. Zn(2+) is bound at residue Cys-106. A substrate-binding site is contributed by Asn-140. Glu-141 acts as the Proton donor in catalysis. Residues Cys-150, Cys-152, and Cys-155 each coordinate Zn(2+). Residue Glu-312 is the Nucleophile of the active site. Substrate-binding positions include Trp-320 and 360-363 (EQMH).

It belongs to the glycosyl hydrolase 42 family.

It carries out the reaction Hydrolysis of terminal non-reducing beta-D-galactose residues in beta-D-galactosides.. In terms of biological role, hydrolyzes chromogen 5-bromo-4-chloro-3-indolyl-beta-D-galactopyranoside (X-Gal) and p-nitrophenyl-beta-D-galactoside (pNPGal). This Thermus sp protein is Beta-galactosidase BgaA.